Consider the following 408-residue polypeptide: Argininosuccinate synthase (408 aa).

ATP contacts are provided by residues 16 to 24 (AYSGGLDTS) and Ala44. Residues Tyr96 and Ser101 each contribute to the L-citrulline site. Gly126 is an ATP binding site. The L-aspartate site is built by Thr128, Asn132, and Asp133. Residue Asn132 participates in L-citrulline binding. L-citrulline-binding residues include Arg136, Ser185, Ser194, Glu270, and Tyr282.

Belongs to the argininosuccinate synthase family. Type 1 subfamily. Homotetramer.

Its subcellular location is the cytoplasm. It catalyses the reaction L-citrulline + L-aspartate + ATP = 2-(N(omega)-L-arginino)succinate + AMP + diphosphate + H(+). The protein operates within amino-acid biosynthesis; L-arginine biosynthesis; L-arginine from L-ornithine and carbamoyl phosphate: step 2/3. The protein is Argininosuccinate synthase of Shewanella woodyi (strain ATCC 51908 / MS32).